Consider the following 351-residue polypeptide: Prohormone-2 (351 aa).

The N-terminal stretch at 1-21 (MMCDWVWLLLTLCSLLMIVQS) is a signal peptide. Propeptides lie at residues 22 to 177 (LPTN…QTQV) and 192 to 319 (ELDI…MISR). Over residues 51–69 (GNQQNHQPENNPSSSYSST) the composition is skewed to polar residues. Disordered stretches follow at residues 51–71 (GNQQNHQPENNPSSSYSSTAE) and 136–176 (NEDR…VQTQ). Residues 136 to 145 (NEDRRKRSEK) are compositionally biased toward basic and acidic residues. Over residues 158–176 (PSTTSFQSPTSTQQSVQTQ) the composition is skewed to low complexity.

It localises to the secreted. The polypeptide is Prohormone-2 (Apis mellifera (Honeybee)).